The following is a 1460-amino-acid chain: Ankyrin repeat-containing protein kinase A (1460 aa).

Disordered regions lie at residues 1-32 (MSIK…NINI), 57-181 (IKQQ…HKSH), 216-259 (RENE…ASST), 272-311 (STSN…VEFD), 329-354 (SSPS…TSTS), 374-510 (FTPS…SSNP), and 551-608 (CPSA…SSIP). Low complexity-rich tracts occupy residues 8–32 (SNIN…NINI), 61–86 (SNNN…PTSH), and 111–128 (SSGS…NNNN). Positions 129–140 (QIKTSNGMNKPN) are enriched in polar residues. Residues 149–162 (KPRENSQNKIDDNK) are compositionally biased toward basic and acidic residues. 2 stretches are compositionally biased toward low complexity: residues 220-259 (NNNN…ASST) and 272-300 (STSN…RSTS). Composition is skewed to polar residues over residues 329-345 (SSPS…VHMP) and 384-404 (PTNS…TIQP). Positions 405–422 (SSLDSSSESVSDGLQSVS) are enriched in low complexity. Polar residues predominate over residues 423–434 (GSPVTASPSPTI). Low complexity predominate over residues 435–461 (SNNTNATTTNNNNNTNTNNNNNNNNNQ). The span at 462 to 472 (HNHHHHQHSHS) shows a compositional bias: basic residues. The interaction with 14-3-3 protein stretch occupies residues 467–667 (HQHSHSQQHD…IFRGCGIPLD (201 aa)). Over residues 486–497 (PSSPTSPTLLPS) the composition is skewed to low complexity. The segment at 499-551 (THDFSSEYSSNPGGKCAICRKPLWSFPISDKSRRCRDCSLVVHRACVPLATEC) adopts a Phorbol-ester/DAG-type zinc-finger fold. Residues 559 to 568 (SKLSVPNGNQ) show a composition bias toward polar residues. Positions 569–608 (SNSSSSSSSSSSSSSSSNSSSSNTKGHSRTPSSPSVSSIP) are enriched in low complexity. One can recognise a GRAM domain in the interval 653–724 (RDFHFIFRGC…SNIASIEKRS (72 aa)). ANK repeat units lie at residues 814–843 (SKEI…QVNS), 852–883 (KGYT…RVRE), 887–920 (DGNT…NINE), 924–955 (NGET…NVNI), and 959–988 (AGES…DPTI). Residues 1112–1375 (LEYTEKIGSG…ATEAMTALAV (264 aa)) form the Protein kinase domain. Residues 1118-1126 (IGSGASGKV) and Lys-1139 contribute to the ATP site. The active-site Proton acceptor is the Asp-1231. Residues 1293-1313 (MGIVMWEIVYCVVYGCYMIPY) traverse the membrane as a helical segment. Residues 1425–1460 (PEEEQIYQEAMEKQRRNQEASANRNQKNKELLNNNN) adopt a coiled-coil conformation. Residues 1434 to 1460 (AMEKQRRNQEASANRNQKNKELLNNNN) form a disordered region.

It belongs to the protein kinase superfamily. TKL Ser/Thr protein kinase family.

The protein localises to the cytoplasm. It localises to the cytoskeleton. It is found in the membrane. Its subcellular location is the nucleus. It carries out the reaction L-seryl-[protein] + ATP = O-phospho-L-seryl-[protein] + ADP + H(+). The enzyme catalyses L-threonyl-[protein] + ATP = O-phospho-L-threonyl-[protein] + ADP + H(+). Its function is as follows. Involved in the development of the fruiting body. Overexpression phenocopies the spnA null phenotype. This Dictyostelium discoideum (Social amoeba) protein is Ankyrin repeat-containing protein kinase A (arkA).